A 143-amino-acid chain; its full sequence is MAKKIDGYIKLMVPAGTANPSPPLGPALGQRGVNIMEFCKAFNAATDGMEKNAPVPTVITVYADRSFSFVTKQPTATYLIKKAAKIKKGSGETGKVSAGTIKQSQVKEIAETKMPDLNANDIDQAMKIIEGSCRAMGLEVVEG.

It belongs to the universal ribosomal protein uL11 family. In terms of assembly, part of the ribosomal stalk of the 50S ribosomal subunit. Interacts with L10 and the large rRNA to form the base of the stalk. L10 forms an elongated spine to which L12 dimers bind in a sequential fashion forming a multimeric L10(L12)X complex. One or more lysine residues are methylated.

Its function is as follows. Forms part of the ribosomal stalk which helps the ribosome interact with GTP-bound translation factors. The protein is Large ribosomal subunit protein uL11 of Erythrobacter litoralis (strain HTCC2594).